Reading from the N-terminus, the 80-residue chain is DNA-binding protein S1FA2 (80 aa).

A Nuclear localization signal motif is present at residues 54-59; the sequence is PPRKKK. Positions 55–70 are enriched in basic residues; the sequence is PRKKKPVSKKKMKREK. The interval 55 to 80 is disordered; it reads PRKKKPVSKKKMKREKLKQGVSAPGE.

The protein belongs to the S1FA transcription factor family.

Its subcellular location is the nucleus. DNA-binding protein that specifically recognizes a negative element (S1F) within the RPS1 promoter. The sequence is that of DNA-binding protein S1FA2 (S1FA2) from Oryza sativa subsp. japonica (Rice).